The primary structure comprises 335 residues: F420-dependent glucose-6-phosphate dehydrogenase (335 aa).

D40 is a coenzyme F420-(gamma-Glu)n binding site. H41 (proton donor) is an active-site residue. Coenzyme F420-(gamma-Glu)n is bound by residues T77 and 108-109; that span reads TG. Residue E110 is the Proton acceptor of the active site. Residues N113, 177–178, and 180–181 contribute to the coenzyme F420-(gamma-Glu)n site; these read GG and VV. T195, K198, K259, and R283 together coordinate substrate.

Belongs to the F420-dependent glucose-6-phosphate dehydrogenase family. In terms of assembly, homodimer.

It catalyses the reaction oxidized coenzyme F420-(gamma-L-Glu)(n) + D-glucose 6-phosphate + H(+) = 6-phospho-D-glucono-1,5-lactone + reduced coenzyme F420-(gamma-L-Glu)(n). Its function is as follows. Catalyzes the coenzyme F420-dependent oxidation of glucose 6-phosphate (G6P) to 6-phosphogluconolactone. The protein is F420-dependent glucose-6-phosphate dehydrogenase of Segniliparus rotundus (strain ATCC BAA-972 / CDC 1076 / CIP 108378 / DSM 44985 / JCM 13578).